The sequence spans 870 residues: Linoleate 9S-lipoxygenase 2 (870 aa).

Positions 32–158 (NDFGATVIDG…KYRYNRVFFS (127 aa)) constitute a PLAT domain. Positions 161–870 (TSLPSKMPAA…ARGIPNSISI (710 aa)) constitute a Lipoxygenase domain. Positions 203 to 243 (YNDLGEPDSGNPRPVLGGSPDRPYPRRGRTGRKPTKTDPTA) are disordered. Basic residues predominate over residues 227 to 236 (PRRGRTGRKP). Fe cation-binding residues include histidine 525, histidine 530, histidine 716, asparagine 720, and isoleucine 870.

It belongs to the lipoxygenase family. In terms of assembly, monomer. Fe cation is required as a cofactor.

It is found in the cytoplasm. It catalyses the reaction (9Z,12Z)-octadecadienoate + O2 = (9S)-hydroperoxy-(10E,12Z)-octadecadienoate. It functions in the pathway lipid metabolism; oxylipin biosynthesis. Functionally, plant lipoxygenase may be involved in a number of diverse aspects of plant physiology including growth and development, pest resistance, and senescence or responses to wounding. Catalyzes the hydroperoxidation of lipids containing a cis,cis-1,4-pentadiene structure. The chain is Linoleate 9S-lipoxygenase 2 (LOX1.1) from Oryza sativa subsp. japonica (Rice).